A 216-amino-acid chain; its full sequence is FMN-dependent NADH:quinone oxidoreductase 3 (216 aa).

Residues serine 10 and 16–18 (SAS) each bind FMN.

Belongs to the azoreductase type 1 family. As to quaternary structure, homodimer. FMN serves as cofactor.

The catalysed reaction is 2 a quinone + NADH + H(+) = 2 a 1,4-benzosemiquinone + NAD(+). It catalyses the reaction N,N-dimethyl-1,4-phenylenediamine + anthranilate + 2 NAD(+) = 2-(4-dimethylaminophenyl)diazenylbenzoate + 2 NADH + 2 H(+). Functionally, quinone reductase that provides resistance to thiol-specific stress caused by electrophilic quinones. Also exhibits azoreductase activity. Catalyzes the reductive cleavage of the azo bond in aromatic azo compounds to the corresponding amines. The chain is FMN-dependent NADH:quinone oxidoreductase 3 from Pseudomonas fluorescens (strain ATCC BAA-477 / NRRL B-23932 / Pf-5).